The chain runs to 301 residues: tRNA pseudouridine synthase B (301 aa).

Aspartate 47 serves as the catalytic Nucleophile.

Belongs to the pseudouridine synthase TruB family. Type 1 subfamily.

The catalysed reaction is uridine(55) in tRNA = pseudouridine(55) in tRNA. In terms of biological role, responsible for synthesis of pseudouridine from uracil-55 in the psi GC loop of transfer RNAs. The polypeptide is tRNA pseudouridine synthase B (Cereibacter sphaeroides (strain ATCC 17025 / ATH 2.4.3) (Rhodobacter sphaeroides)).